The following is a 205-amino-acid chain: MESKLRVGIAGPVGSGKTAIIQRLCENLKDRLEIAVVTNDIYTQEDAKFLTNSKALAPERIKGVETGGCPHTAIREDCSINRIAVEELEHKFTTLDLVFVESGGDNLAASFSPELVDVCIYIIDVAAGDKIPRKGGPGITRSDLLVINKIDLAEMVGASLKIMERDTLLMRKNLPWCFTNTKTGEGIKIIEGFLCNQIPSVHKMV.

11-18 (GPVGSGKT) contacts GTP.

It belongs to the SIMIBI class G3E GTPase family. UreG subfamily. As to quaternary structure, homodimer. UreD, UreF and UreG form a complex that acts as a GTP-hydrolysis-dependent molecular chaperone, activating the urease apoprotein by helping to assemble the nickel containing metallocenter of UreC. The UreE protein probably delivers the nickel.

The protein resides in the cytoplasm. Functionally, facilitates the functional incorporation of the urease nickel metallocenter. This process requires GTP hydrolysis, probably effectuated by UreG. This chain is Urease accessory protein UreG, found in Prochlorococcus marinus (strain NATL2A).